Here is a 566-residue protein sequence, read N- to C-terminus: MPKLEIYKNLFLDKIGKNFTNLEISELLEPFKAEFDGFDESSGKIKIEFNDTNRPDLWSYLGLARQIKTYFFGEMPYYDFFSKKGDFKKFYGEILVDGKMSQIRPFIFGFLAKGLIINDKMLETLIQFQEKLCQNYGQKRRRIAMGMYNSNFIKFPISYIASSPNHKFVPFGMDYELSLLEINEKHPKGLEYSHIIKNFDKFPLLLDDNNNVVSYPPIINSNNIGSLKVGDTDLFVEVTGIDFEATLLALSIAACDFYDMGFEILPVKTVFREPFNLDFKELVCPYYFQEEVEFNVENINRLLGSNLTLERICLSLKKMGVNSYSKDFKNYIVPPFYRNDFLHEVDVIEDVMIGEGLSSFNPELPKAFAVGRLSPLEEFSRNVRNLMVGMGFQEMIYNYMGSKKDFIDRMNINDQNFLKVSNPMTENYEYIRASIIPNLLKSESVSSNFPYPHKIFEIGKVALKNLDTTEGTSTFTNLAFLMSGKEISFNEINSIVATLFYYLNIEINLIESKTTFYINGRGADIVIEGFNIGGFGEISPYVLNNFGIFIPCSVFEVNINKLMSRS.

Positions 287–362 (YFQEEVEFNV…IGEGLSSFNP (76 aa)) constitute a B5 domain. Residues D340, D346, E349, and D350 each contribute to the Mg(2+) site.

The protein belongs to the phenylalanyl-tRNA synthetase beta subunit family. Type 2 subfamily. In terms of assembly, tetramer of two alpha and two beta subunits. The cofactor is Mg(2+).

It is found in the cytoplasm. The enzyme catalyses tRNA(Phe) + L-phenylalanine + ATP = L-phenylalanyl-tRNA(Phe) + AMP + diphosphate + H(+). The polypeptide is Phenylalanine--tRNA ligase beta subunit (Borreliella burgdorferi (strain ATCC 35210 / DSM 4680 / CIP 102532 / B31) (Borrelia burgdorferi)).